The following is a 302-amino-acid chain: 2-phosphoglycerate kinase (302 aa).

The region spanning 2-89 is the ATP-cone domain; the sequence is IKVIERDGKV…FWRRFRKLKI (88 aa).

Belongs to the 2-phosphoglycerate kinase family. Requires a divalent metal cation as cofactor.

The enzyme catalyses (2R)-2-phosphoglycerate + ATP = (2R)-2,3-bisphosphoglycerate + ADP + H(+). The protein operates within thermoadapter biosynthesis; cyclic 2,3-diphosphoglycerate biosynthesis; cyclic 2,3-diphosphoglycerate from 2-phospho-D-glycerate: step 1/2. In terms of biological role, catalyzes the phosphorylation of 2-phosphoglycerate to 2,3-diphosphoglycerate. Involved in the biosynthesis of cyclic 2,3-bisphosphoglycerate, a thermoprotectant. This chain is 2-phosphoglycerate kinase, found in Pyrococcus furiosus (strain ATCC 43587 / DSM 3638 / JCM 8422 / Vc1).